Consider the following 459-residue polypeptide: Bifunctional protein GlmU (459 aa).

Positions 1–229 (MSNFAIILAA…FDESLGVNDR (229 aa)) are pyrophosphorylase. Residues 8–11 (LAAG), K22, Q72, and 77–78 (GT) each bind UDP-N-acetyl-alpha-D-glucosamine. D102 lines the Mg(2+) pocket. The UDP-N-acetyl-alpha-D-glucosamine site is built by G139, E154, N169, and N227. Residue N227 coordinates Mg(2+). The linker stretch occupies residues 230–250 (VALATAESVMRRRINHKHMVN). The tract at residues 251-459 (GVSFVNPEAT…TRLPHHPKNQ (209 aa)) is N-acetyltransferase. 2 residues coordinate UDP-N-acetyl-alpha-D-glucosamine: R332 and K350. H362 (proton acceptor) is an active-site residue. The UDP-N-acetyl-alpha-D-glucosamine site is built by Y365 and N376. Residues A379, 385-386 (NY), S404, A422, and R439 each bind acetyl-CoA.

In the N-terminal section; belongs to the N-acetylglucosamine-1-phosphate uridyltransferase family. The protein in the C-terminal section; belongs to the transferase hexapeptide repeat family. In terms of assembly, homotrimer. It depends on Mg(2+) as a cofactor.

Its subcellular location is the cytoplasm. The enzyme catalyses alpha-D-glucosamine 1-phosphate + acetyl-CoA = N-acetyl-alpha-D-glucosamine 1-phosphate + CoA + H(+). It carries out the reaction N-acetyl-alpha-D-glucosamine 1-phosphate + UTP + H(+) = UDP-N-acetyl-alpha-D-glucosamine + diphosphate. It participates in nucleotide-sugar biosynthesis; UDP-N-acetyl-alpha-D-glucosamine biosynthesis; N-acetyl-alpha-D-glucosamine 1-phosphate from alpha-D-glucosamine 6-phosphate (route II): step 2/2. The protein operates within nucleotide-sugar biosynthesis; UDP-N-acetyl-alpha-D-glucosamine biosynthesis; UDP-N-acetyl-alpha-D-glucosamine from N-acetyl-alpha-D-glucosamine 1-phosphate: step 1/1. It functions in the pathway bacterial outer membrane biogenesis; LPS lipid A biosynthesis. In terms of biological role, catalyzes the last two sequential reactions in the de novo biosynthetic pathway for UDP-N-acetylglucosamine (UDP-GlcNAc). The C-terminal domain catalyzes the transfer of acetyl group from acetyl coenzyme A to glucosamine-1-phosphate (GlcN-1-P) to produce N-acetylglucosamine-1-phosphate (GlcNAc-1-P), which is converted into UDP-GlcNAc by the transfer of uridine 5-monophosphate (from uridine 5-triphosphate), a reaction catalyzed by the N-terminal domain. In Streptococcus pneumoniae (strain JJA), this protein is Bifunctional protein GlmU.